The primary structure comprises 383 residues: Trihelix transcription factor ASIL1 (383 aa).

4 disordered regions span residues 1 to 32 (MEDD…LPTN), 61 to 94 (HTPS…DDCW), 189 to 295 (IASS…SGVG), and 346 to 383 (EITQ…NVSS). Gly residues predominate over residues 66–88 (TGGGGSGNRNGRGGGGGSGGGGG). In terms of domain architecture, Myb-like spans 94–153 (WSEEATKVLIEAWGDRFSEPGKGTLKQQHWKEVAEIVNKSRQCKYPKTDIQCKNRIDTVK). Residues 206–225 (NSRSSMFKRQTKGNQIVQQQ) show a composition bias toward polar residues. Basic and acidic residues predominate over residues 226–235 (QEKRGSDSMR). Residues 228-241 (KRGSDSMRWHFRKR) carry the Bipartite nuclear localization signal motif. Residues 246-262 (TESESDPEPEASPEESA) are compositionally biased toward acidic residues. A compositionally biased stretch (low complexity) spans 263–274 (ESLPPLQPIQPL). A coiled-coil region spans residues 304–365 (FTEAYEKAET…ERSRQRGERR (62 aa)). The segment covering 356 to 367 (ERSRQRGERRIV) has biased composition (basic and acidic residues).

It is found in the nucleus. Its function is as follows. Transcription repressor that binds specific DNA sequence such as the GT-box-like motif 5'-CGTGATT-3' in the AT2S3 promoter. Negative regulator of seed maturation genes during seed germination and seedling development. May target GT-box-containing embryonic genes by competing with the binding of transcriptional activators to this promoter region. Contributes to the maintenance and control of seed filling and may repress the maturation program during early embryogenesis. This is Trihelix transcription factor ASIL1 from Arabidopsis thaliana (Mouse-ear cress).